Reading from the N-terminus, the 126-residue chain is Glycine cleavage system H protein (126 aa).

In terms of domain architecture, Lipoyl-binding spans 22–104 (IAYVGITDYA…YGKGWLIKIK (83 aa)). N6-lipoyllysine is present on Lys-63.

The protein belongs to the GcvH family. In terms of assembly, the glycine cleavage system is composed of four proteins: P, T, L and H. (R)-lipoate serves as cofactor.

Its function is as follows. The glycine cleavage system catalyzes the degradation of glycine. The H protein shuttles the methylamine group of glycine from the P protein to the T protein. The protein is Glycine cleavage system H protein of Phocaeicola vulgatus (strain ATCC 8482 / DSM 1447 / JCM 5826 / CCUG 4940 / NBRC 14291 / NCTC 11154) (Bacteroides vulgatus).